A 210-amino-acid chain; its full sequence is LexA repressor (210 aa).

Residues 31 to 51 (RAEISRELGFRSPNAAEEHLK) constitute a DNA-binding region (H-T-H motif). Catalysis depends on for autocatalytic cleavage activity residues S126 and K163.

Belongs to the peptidase S24 family. In terms of assembly, homodimer.

It carries out the reaction Hydrolysis of Ala-|-Gly bond in repressor LexA.. Represses a number of genes involved in the response to DNA damage (SOS response), including recA and lexA. In the presence of single-stranded DNA, RecA interacts with LexA causing an autocatalytic cleavage which disrupts the DNA-binding part of LexA, leading to derepression of the SOS regulon and eventually DNA repair. This is LexA repressor from Actinobacillus succinogenes (strain ATCC 55618 / DSM 22257 / CCUG 43843 / 130Z).